The sequence spans 305 residues: Aspartate carbamoyltransferase catalytic subunit (305 aa).

Carbamoyl phosphate-binding residues include Arg58 and Thr59. Lys86 contributes to the L-aspartate binding site. Carbamoyl phosphate contacts are provided by Arg108, His136, and Gln139. Arg169 and Arg223 together coordinate L-aspartate. 2 residues coordinate carbamoyl phosphate: Gly264 and Pro265.

The protein belongs to the aspartate/ornithine carbamoyltransferase superfamily. ATCase family. In terms of assembly, heterododecamer (2C3:3R2) of six catalytic PyrB chains organized as two trimers (C3), and six regulatory PyrI chains organized as three dimers (R2).

It catalyses the reaction carbamoyl phosphate + L-aspartate = N-carbamoyl-L-aspartate + phosphate + H(+). Its pathway is pyrimidine metabolism; UMP biosynthesis via de novo pathway; (S)-dihydroorotate from bicarbonate: step 2/3. In terms of biological role, catalyzes the condensation of carbamoyl phosphate and aspartate to form carbamoyl aspartate and inorganic phosphate, the committed step in the de novo pyrimidine nucleotide biosynthesis pathway. The protein is Aspartate carbamoyltransferase catalytic subunit of Syntrophobacter fumaroxidans (strain DSM 10017 / MPOB).